We begin with the raw amino-acid sequence, 461 residues long: pre-mRNA splicing regulator USH1G (461 aa).

3 ANK repeats span residues 31 to 60, 64 to 93, and 97 to 126; these read DGMT…DPDK, WGNT…NIWC, and DYHT…KQSS. Residues 329–368 form a disordered region; that stretch reads LGREDGGLDGAGTPRGRLHSSPSLDDDSLGSANSLQDRSC. One can recognise an SAM domain in the interval 385–447; that stretch reads LEPETSPLET…KILGAVRRRR (63 aa). Ser422 carries the post-translational modification Phosphoserine.

As to quaternary structure, part of a complex composed of USH1C, USH1G and MYO7A. Interacts with USH1C (via the first PDZ domain). Interacts with PDZD7. Interacts with CDH23 and PCDH15; these interactions may recruit USH1G to the plasma membrane. Interacts with intraflagellar transport proteins IFT20, IFT52 and IFT57. Interacts with splicing factors SF3B1, PRPF6, PRPF31 and SON. Interacts with the U4/U6.U5 tri-small nuclear ribonucleoprotein (tri-snRNP) complex in the presence of pre-mRNAs. Interacts (via SAM domain) with MAGI2 (via PDZ 6 domain); the interaction is triggered by phosphorylation of USH1G by CK2 and negatively regulates MAGI2-mediated endocytosis. As to expression, detected in stereocilia from cochlear hair cells (at protein level). Detected in retinal photoreceptor cell cilia (at protein level). Highly expressed in the cochlea, testis, cerebellum and eye, and low levels in brain, thymus and spleen. Significant signals detected in the neurosensory epithelium of inner ear cochlea and saccule, especially in inner and outer hair cells.

It is found in the cytoplasm. Its subcellular location is the cytosol. The protein resides in the cytoskeleton. It localises to the cell membrane. The protein localises to the cell projection. It is found in the cilium. Its subcellular location is the nucleus speckle. The protein resides in the nucleus. It localises to the cajal body. The protein localises to the microtubule organizing center. It is found in the centrosome. Its subcellular location is the photoreceptor inner segment. Plays a role in pre-mRNA splicing by regulating the release and transfer of U4/U6.U5 tri-small nuclear ribonucleoprotein (tri-snRNP) complexes from their assembly site in Cajal bodies to nuclear speckles, thereby contributing to the assembly of the pre-catalytic spliceosome on target pre-mRNAs. May also participate in recycling of snRNPs back to Cajal bodies during splicing. Plays a role in regulating MAGI2-mediated endocytosis. Anchoring/scaffolding protein that is a part of the functional network formed by USH1C, USH1G, CDH23 and MYO7A that mediates mechanotransduction in cochlear hair cells. Required for normal development and maintenance of cochlear hair cell bundles. Required for normal hearing. The sequence is that of pre-mRNA splicing regulator USH1G (Ush1g) from Mus musculus (Mouse).